A 130-amino-acid chain; its full sequence is MTTKRKAYVRTMAPNWWQQLGFYRFYMLREGTSVPTVWFSILLIYGVFALKSGPAGWEGFVGFLQNPLVLLINIITLLAAVLHTKTWFELAPKAANIIVKDEKMGPEPVIKALWVVTIVATAIILAVALL.

3 consecutive transmembrane segments (helical) span residues 37 to 57 (VWFS…PAGW), 60 to 80 (FVGF…LLAA), and 109 to 129 (VIKA…AVAL).

Belongs to the FrdC family. In terms of assembly, part of an enzyme complex containing four subunits: a flavoprotein (FrdA), an iron-sulfur protein (FrdB), and two hydrophobic anchor proteins (FrdC and FrdD).

It localises to the cell inner membrane. Functionally, two distinct, membrane-bound, FAD-containing enzymes are responsible for the catalysis of fumarate and succinate interconversion; fumarate reductase is used in anaerobic growth, and succinate dehydrogenase is used in aerobic growth. Anchors the catalytic components of the fumarate reductase complex to the cell inner membrane, binds quinones. The chain is Fumarate reductase subunit C from Yersinia enterocolitica serotype O:8 / biotype 1B (strain NCTC 13174 / 8081).